The sequence spans 342 residues: Predicted GPI-anchored protein 54 (342 aa).

A signal peptide spans 1–16; sequence MRANYLLLLAATAVQA. N-linked (GlcNAc...) asparagine glycans are attached at residues asparagine 25, asparagine 105, and asparagine 151. Residue glycine 314 is the site of GPI-anchor amidated glycine attachment. The propeptide at 315–342 is removed in mature form; the sequence is ASQSHPISSYSNYTISDYAPPISSYYSL. Asparagine 326 carries an N-linked (GlcNAc...) asparagine glycan.

It localises to the cell membrane. In Candida albicans (strain SC5314 / ATCC MYA-2876) (Yeast), this protein is Predicted GPI-anchored protein 54 (PGA54).